The primary structure comprises 319 residues: MamJ paralog LimJ (319 aa).

Disordered regions lie at residues 1-59 and 145-176; these read MMME…PAPV and AAAP…TETE. Residues 30 to 52 are compositionally biased toward low complexity; sequence AALAPAADAEIPASSAPEPAAPI. Acidic residues predominate over residues 150-164; the sequence is PEPEPVPEPEPEPEP.

The protein belongs to the magnetosome MamJ protein family.

The protein localises to the magnetosome. In terms of biological role, regulates the dynamic behavior of MamK filaments; paralog MamJ also promotes MamK turnover. At least one other protein besides MamJ and LimJ is required for MamK turnover. Might connect magnetosomes to MamK filaments. In Paramagnetospirillum magneticum (strain ATCC 700264 / AMB-1) (Magnetospirillum magneticum), this protein is MamJ paralog LimJ.